Here is a 457-residue protein sequence, read N- to C-terminus: D(1B) dopamine receptor (457 aa).

The Extracellular segment spans residues 1-41 (MYQPFQHLDSDQVASWQSPEMLMNKSVSRESQRRKELVAGQ). N-linked (GlcNAc...) asparagine glycosylation occurs at Asn-24. A helical membrane pass occupies residues 42–67 (IVTGSLLLLLIFWTLFGNILVCTAVM). Over 68–78 (RFRHLRSRVTN) the chain is Cytoplasmic. A helical membrane pass occupies residues 79-105 (IFIVSLAVSDLLVALLVMPWKAVAEVA). Residues 106–114 (GHWPFGAFC) lie on the Extracellular side of the membrane. Residues Cys-114 and Cys-199 are joined by a disulfide bond. The chain crosses the membrane as a helical span at residues 115–137 (DIWVAFDIMCSTASILNLCVISV). At 138–156 (DRYWAISSPFRYERKMTQR) the chain is on the cytoplasmic side. Residues 157 to 181 (VALLMISTAWALSVLISFIPVQLSW) form a helical membrane-spanning segment. Residues 182 to 205 (HKSETEDHLLSNHSTGNCDSSLNR) are Extracellular-facing. Residues 206-231 (TYAISSSLISFYIPVAIMIVTYTRIY) traverse the membrane as a helical segment. At 232–282 (RIAQIQIKRISTLERAAEHAQSCRSNRVDSCSRHHQTSLRTSIKKETKVLK) the chain is on the cytoplasmic side. A helical transmembrane segment spans residues 283–309 (TLSIIMGVFVCCWLPFFILNCMVPFCD). The Extracellular segment spans residues 310–326 (RSPGHPQAGLPCVSETT). The chain crosses the membrane as a helical span at residues 327 to 351 (FDIFVWFGWANSSLNPIIYAFNADF). Topologically, residues 352–457 (RKVFSSLLGC…ITPSMSNGIH (106 aa)) are cytoplasmic. Cys-361 carries the S-palmitoyl cysteine lipid modification.

This sequence belongs to the G-protein coupled receptor 1 family. As to expression, brain and kidney.

It localises to the cell membrane. Functionally, dopamine receptor whose activity is mediated by G proteins which activate adenylyl cyclase. The sequence is that of D(1B) dopamine receptor (drd5) from Xenopus laevis (African clawed frog).